Reading from the N-terminus, the 130-residue chain is Small ribosomal subunit protein bS16 (130 aa).

The interval 82 to 130 (VLPKTERNNPKKAVPGKKAQDRAEEKAAKAAEASEAPADEAPAEEAAAE) is disordered. The segment covering 99 to 110 (KAQDRAEEKAAK) has biased composition (basic and acidic residues). Residues 118 to 130 (PADEAPAEEAAAE) show a composition bias toward acidic residues.

Belongs to the bacterial ribosomal protein bS16 family.

In Dinoroseobacter shibae (strain DSM 16493 / NCIMB 14021 / DFL 12), this protein is Small ribosomal subunit protein bS16.